The following is a 78-amino-acid chain: Mandibular organ-inhibiting hormone 1 (78 aa).

Disulfide bonds link Cys7–Cys44, Cys24–Cys40, and Cys27–Cys53.

The protein belongs to the arthropod CHH/MIH/GIH/VIH hormone family. As to expression, produced by the medulla terminalis X-organ in the eyestalks and transported to the sinus gland where it is stored and released.

Its subcellular location is the secreted. Functionally, represses the synthesis of methyl farnesoate, the precursor of insect juvenile hormone III in the mandibular organ. This is Mandibular organ-inhibiting hormone 1 from Cancer pagurus (Rock crab).